A 207-amino-acid chain; its full sequence is Ribonuclease HII (207 aa).

Positions 18–206 (EFIVGVDEVG…VKNILQLLEK (189 aa)) constitute an RNase H type-2 domain. 3 residues coordinate a divalent metal cation: Asp-24, Glu-25, and Asp-115.

The protein belongs to the RNase HII family. Mn(2+) serves as cofactor. Requires Mg(2+) as cofactor.

Its subcellular location is the cytoplasm. The enzyme catalyses Endonucleolytic cleavage to 5'-phosphomonoester.. Its function is as follows. Endonuclease that specifically degrades the RNA of RNA-DNA hybrids. This is Ribonuclease HII from Hydrogenovibrio crunogenus (strain DSM 25203 / XCL-2) (Thiomicrospira crunogena).